The following is a 183-amino-acid chain: Translocon-associated protein subunit beta (183 aa).

The signal sequence occupies residues 1 to 17 (MRLLAVVVLALLAVSQA). The Lumenal portion of the chain corresponds to 18–146 (EEGARLLASK…REFDRRFSPH (129 aa)). N88 carries an N-linked (GlcNAc...) (high mannose) asparagine glycan. A glycan (N-linked (GlcNAc...) asparagine) is linked at N104. The helical transmembrane segment at 147 to 167 (FLDWAAFGVMTLPSIGIPLLL) threads the bilayer. Topologically, residues 168-183 (WYSSKRKYDTPKPKKN) are cytoplasmic.

This sequence belongs to the TRAP-beta family. In terms of assembly, heterotetramer of TRAP-alpha, TRAP-beta, TRAP-delta and TRAP-gamma. Interacts with STING1.

The protein localises to the endoplasmic reticulum membrane. In terms of biological role, TRAP proteins are part of a complex whose function is to bind calcium to the ER membrane and thereby regulate the retention of ER resident proteins. The sequence is that of Translocon-associated protein subunit beta (Ssr2) from Mus musculus (Mouse).